A 178-amino-acid chain; its full sequence is UPF0232 protein cgR_0005 (178 aa).

Residues 16–55 (AMRRNGSVPDLNKNDAFRRPPAPKGGVEKRKKGRASGLDG) form a disordered region.

This sequence belongs to the UPF0232 family.

The sequence is that of UPF0232 protein cgR_0005 from Corynebacterium glutamicum (strain R).